The primary structure comprises 1612 residues: Phospholipid-transporting ATPase DNF2 (1612 aa).

The tract at residues 1 to 74 (MSSPSKPTSP…MKDISTPDLS (74 aa)) is disordered. At 1 to 252 (MSSPSKPTSP…TFFPKNILFQ (252 aa)) the chain is on the cytoplasmic side. Residues 20–30 (GSASNGLSSMS) are compositionally biased toward low complexity. T70 carries the phosphothreonine modification. Phosphoserine is present on S85. A helical membrane pass occupies residues 253-273 (FHNFANIYFLILLILGAFQIF). The segment at 272–279 (IFGVTNPG) is involved in phosphatidylcholine substrate selection. Over 274-277 (GVTN) the chain is Extracellular. The chain crosses the membrane as a helical span at residues 278–298 (PGFASVPLIVIVIITAIKDGI). Residues 299–598 (EDSRRTVLDL…RISRELNFSV (300 aa)) lie on the Cytoplasmic side of the membrane. Residues 364 to 373 (KLQKKREELR) show a composition bias toward basic and acidic residues. A disordered region spans residues 364–384 (KLQKKREELRRKRNSRSFGPR). S389, S392, S396, and S403 each carry phosphoserine. Residue Y406 is modified to Phosphotyrosine. Residues 599-619 (ILNFVLLFILCFTAGIVNGVY) traverse the membrane as a helical segment. Residues 620–639 (YKQKPRSRDYFEFGTIGGSA) are Extracellular-facing. Residues 631–635 (EFGTI) form an involved in phosphatidylcholine substrate selection region. Residues 640–660 (STNGFVSFWVAVILYQSLVPI) form a helical membrane-spanning segment. Residues 661 to 1231 (SLYISVEIIK…WCYKRLAEMI (571 aa)) are Cytoplasmic-facing. D712 (4-aspartylphosphate intermediate) is an active-site residue. ATP contacts are provided by D712, K713, and T714. D712 is a Mg(2+) binding site. Residue T714 coordinates Mg(2+). Phosphothreonine is present on T782. E846, F887, S889, K892, and K916 together coordinate ATP. K938 is covalently cross-linked (Glycyl lysine isopeptide (Lys-Gly) (interchain with G-Cter in ubiquitin)). 7 residues coordinate ATP: R952, T953, T1032, G1033, D1034, R1147, and K1153. D1173 is a Mg(2+) binding site. ATP-binding residues include N1176 and D1177. D1177 contributes to the Mg(2+) binding site. A helical membrane pass occupies residues 1232–1252 (PQFFYKNVIFTLSLFWYGIYN). Residues 1253 to 1262 (NFDGSYLFEY) are Extracellular-facing. Residues 1263–1283 (TYLTFYNLAFTSVPVILLAVL) traverse the membrane as a helical segment. The Cytoplasmic portion of the chain corresponds to 1284–1313 (DQDVSDTVSMLVPQLYRVGILRKEWNQTKF). A helical transmembrane segment spans residues 1314–1334 (LWYMLDGVYQSVICFFFPYLA). The Extracellular segment spans residues 1335–1350 (YHKNMVVTENGLGLDH). Residues 1351 to 1371 (RYFVGVFVTAIAVTSCNFYVF) traverse the membrane as a helical segment. Over 1372 to 1377 (MEQYRW) the chain is Cytoplasmic. The helical transmembrane segment at 1378 to 1398 (DWFCGLFICLSLAVFYGWTGI) threads the bilayer. The Extracellular segment spans residues 1399 to 1418 (WTSSSSSNEFYKGAARVFAQ). The helical transmembrane segment at 1419-1439 (PAYWAVLFVGVLFCLLPRFTI) threads the bilayer. R1436 is a binding site for a 1,2-diacyl-sn-glycero-3-phospho-L-serine. Over 1440–1612 (DCIRKIFYPK…TLLSQRSRDR (173 aa)) the chain is Cytoplasmic. The residue at position 1542 (S1542) is a Phosphoserine. The tract at residues 1544 to 1563 (VTTTNNLPRRSMASARGNKL) is disordered. Position 1592 is a phosphoserine (S1592).

It belongs to the cation transport ATPase (P-type) (TC 3.A.3) family. Type IV subfamily. As to quaternary structure, component of a flippase complex consisting of DNF1 and LEM3. Interacts with LEM3; the interaction is direct. It depends on Mg(2+) as a cofactor. Post-translationally, phosphorylated by FPK1 and KIN82.

It is found in the cell membrane. The catalysed reaction is ATP + H2O + phospholipidSide 1 = ADP + phosphate + phospholipidSide 2.. It catalyses the reaction a 1,2-diacyl-sn-glycero-3-phosphoethanolamine(out) + ATP + H2O = a 1,2-diacyl-sn-glycero-3-phosphoethanolamine(in) + ADP + phosphate + H(+). It carries out the reaction a 1,2-diacyl-sn-glycero-3-phosphocholine(out) + ATP + H2O = a 1,2-diacyl-sn-glycero-3-phosphocholine(in) + ADP + phosphate + H(+). The enzyme catalyses a beta-D-glucosyl-(1&lt;-&gt;1')-N-acylsphing-4-enine(out) + ATP + H2O = a beta-D-glucosyl-(1&lt;-&gt;1')-N-acylsphing-4-enine(in) + ADP + phosphate + H(+). The catalysed reaction is a 1,2-diacyl-sn-glycero-3-phospho-L-serine(out) + ATP + H2O = a 1,2-diacyl-sn-glycero-3-phospho-L-serine(in) + ADP + phosphate + H(+). Its activity is regulated as follows. Phosphatidylcholine flippase activity is inhibited by glucosylsphingosine, lactosylsphingosine, lysophosphatidylcholine and to a lesser degree sphingosine-1-phosphate and lysosphingomyelin. Glucosylceramide flippase activity is inhibited by lysophosphatidylcholine, glucosylsphingosine and to a lesser degree lactosylsphingosine whereas lysosphingomyelin has a stimulatory effect at low concentrations. In terms of biological role, catalytic component of a P4-ATPase flippase complex which catalyzes the hydrolysis of ATP coupled to the transport of glucosylceramide, phosphatidylcholine, phosphatidylethanolamine, and small amounts of phosphatidylserine from the lumenal to the cytosolic leaflet of the cell membrane and ensures the maintenance of asymmetric distribution of phospholipids. Does not appear to transport sphingomyelin, inositol phosphoceramide or phosphatidic acid. Required for efficient endocytosis. Required for protein transport from Golgi to vacuoles. The protein is Phospholipid-transporting ATPase DNF2 (DNF2) of Saccharomyces cerevisiae (strain ATCC 204508 / S288c) (Baker's yeast).